The sequence spans 481 residues: Phospho-2-dehydro-3-deoxyheptonate aldolase (481 aa).

A disordered region spans residues 1 to 22 (MSQQTTPNAPGWAPDSWRSKPI).

This sequence belongs to the class-II DAHP synthase family. In terms of assembly, homodimer. The N-terminus is blocked.

The catalysed reaction is D-erythrose 4-phosphate + phosphoenolpyruvate + H2O = 7-phospho-2-dehydro-3-deoxy-D-arabino-heptonate + phosphate. It participates in metabolic intermediate biosynthesis; chorismate biosynthesis; chorismate from D-erythrose 4-phosphate and phosphoenolpyruvate: step 1/7. In Neurospora crassa (strain ATCC 24698 / 74-OR23-1A / CBS 708.71 / DSM 1257 / FGSC 987), this protein is Phospho-2-dehydro-3-deoxyheptonate aldolase (aro-8).